The following is a 374-amino-acid chain: Eukaryotic translation initiation factor 3 subunit M (374 aa).

The residue at position 2 (S2) is an N-acetylserine. Phosphoserine occurs at positions 2 and 152. One can recognise a PCI domain in the interval 180–339 (AASKVMVELL…RKVVVSHSTH (160 aa)). The residue at position 254 (K254) is an N6-acetyllysine. Position 367 is a phosphoserine (S367).

Belongs to the eIF-3 subunit M family. In terms of assembly, component of the eukaryotic translation initiation factor 3 (eIF-3) complex, which is composed of 13 subunits: EIF3A, EIF3B, EIF3C, EIF3D, EIF3E, EIF3F, EIF3G, EIF3H, EIF3I, EIF3J, EIF3K, EIF3L and EIF3M. The eIF-3 complex appears to include 3 stable modules: module A is composed of EIF3A, EIF3B, EIF3G and EIF3I; module B is composed of EIF3F, EIF3H, and EIF3M; and module C is composed of EIF3C, EIF3D, EIF3E, EIF3K and EIF3L. EIF3C of module C binds EIF3B of module A and EIF3H of module B, thereby linking the three modules. EIF3J is a labile subunit that binds to the eIF-3 complex via EIF3B. The eIF-3 complex interacts with RPS6KB1 under conditions of nutrient depletion. Mitogenic stimulation leads to binding and activation of a complex composed of MTOR and RPTOR, leading to phosphorylation and release of RPS6KB1 and binding of EIF4B to eIF-3.

It localises to the cytoplasm. In terms of biological role, component of the eukaryotic translation initiation factor 3 (eIF-3) complex, which is required for several steps in the initiation of protein synthesis. The eIF-3 complex associates with the 40S ribosome and facilitates the recruitment of eIF-1, eIF-1A, eIF-2:GTP:methionyl-tRNAi and eIF-5 to form the 43S pre-initiation complex (43S PIC). The eIF-3 complex stimulates mRNA recruitment to the 43S PIC and scanning of the mRNA for AUG recognition. The eIF-3 complex is also required for disassembly and recycling of post-termination ribosomal complexes and subsequently prevents premature joining of the 40S and 60S ribosomal subunits prior to initiation. The eIF-3 complex specifically targets and initiates translation of a subset of mRNAs involved in cell proliferation, including cell cycling, differentiation and apoptosis, and uses different modes of RNA stem-loop binding to exert either translational activation or repression. This is Eukaryotic translation initiation factor 3 subunit M from Pongo abelii (Sumatran orangutan).